The chain runs to 427 residues: Ectonucleoside triphosphate diphosphohydrolase 5 (427 aa).

An N-terminal signal peptide occupies residues methionine 1 to glutamate 24. Residue glutamate 171 is the Proton acceptor of the active site. Asparagine 231 is a glycosylation site (N-linked (GlcNAc...) asparagine). 2 disulfides stabilise this stretch: cysteine 271–cysteine 302 and cysteine 362–cysteine 376.

Belongs to the GDA1/CD39 NTPase family. In terms of assembly, monomer; active form. Homodimer; disulfide-linked. Homodimers are enzymatically inactive. Requires Ca(2+) as cofactor. Mg(2+) is required as a cofactor. N-glycosylated; high-mannose type. As to expression, ubiquitous.

The protein localises to the endoplasmic reticulum. Its subcellular location is the secreted. It catalyses the reaction a ribonucleoside 5'-diphosphate + H2O = a ribonucleoside 5'-phosphate + phosphate + H(+). The catalysed reaction is GDP + H2O = GMP + phosphate + H(+). The enzyme catalyses UDP + H2O = UMP + phosphate + H(+). It carries out the reaction IDP + H2O = IMP + phosphate + H(+). It catalyses the reaction CDP + H2O = CMP + phosphate + H(+). The catalysed reaction is ADP + H2O = AMP + phosphate + H(+). It participates in protein modification; protein glycosylation. Functionally, hydrolyzes nucleoside diphosphates with a preference for GDP, IDP and UDP compared to ADP and CDP. In the lumen of the endoplasmic reticulum, hydrolyzes UDP that acts as an end-product feedback inhibitor of the UDP-Glc:glycoprotein glucosyltransferases. UMP can be transported back by an UDP-sugar antiporter to the cytosol where it is consumed to regenerate UDP-glucose. Therefore, it positively regulates protein reglucosylation by clearing UDP from the ER lumen and by promoting the regeneration of UDP-glucose. Protein reglucosylation is essential to proper glycoprotein folding and quality control in the ER. This is Ectonucleoside triphosphate diphosphohydrolase 5 (Entpd5) from Mus musculus (Mouse).